The sequence spans 98 residues: Large ribosomal subunit protein uL23 (98 aa).

It belongs to the universal ribosomal protein uL23 family. Part of the 50S ribosomal subunit. Contacts protein L29, and trigger factor when it is bound to the ribosome.

Functionally, one of the early assembly proteins it binds 23S rRNA. One of the proteins that surrounds the polypeptide exit tunnel on the outside of the ribosome. Forms the main docking site for trigger factor binding to the ribosome. The polypeptide is Large ribosomal subunit protein uL23 (Clostridium botulinum (strain Eklund 17B / Type B)).